Reading from the N-terminus, the 122-residue chain is Small ribosomal subunit protein uS13 (122 aa).

The tract at residues 99 to 122 is disordered; it reads RGQRTHTNARTRKGPAKAIAGKKK.

It belongs to the universal ribosomal protein uS13 family. As to quaternary structure, part of the 30S ribosomal subunit. Forms a loose heterodimer with protein S19. Forms two bridges to the 50S subunit in the 70S ribosome.

Located at the top of the head of the 30S subunit, it contacts several helices of the 16S rRNA. In the 70S ribosome it contacts the 23S rRNA (bridge B1a) and protein L5 of the 50S subunit (bridge B1b), connecting the 2 subunits; these bridges are implicated in subunit movement. Contacts the tRNAs in the A and P-sites. In Rhodopseudomonas palustris (strain BisB5), this protein is Small ribosomal subunit protein uS13.